Reading from the N-terminus, the 300-residue chain is Matrix protein (300 aa).

Positions 1–36 (MHMFPLGVVEDSDPPGPPIGRASGSPPPGAGRSTAK) are disordered.

As to quaternary structure, homodimer. Dimerization is critical for virion formation. Interacts with host ANP32B.

The protein resides in the virion. Its subcellular location is the host cell membrane. In terms of biological role, the M protein has a crucial role in virus assembly and interacts with the RNP complex as well as with the viral membrane. Associates with phosphatidylserine (PS) and phosphatidylinositol 4,5-bisphosphate (PIP2) at the plasma membrane. Interaction with PIP2 triggers matrix protein lattice polymerization. Matrix proteins induce host membrane deformation and curvature necessary for virion assembly/budding. The protein is Matrix protein (M) of Measles virus (strain Yamagata-1) (MeV).